We begin with the raw amino-acid sequence, 116 residues long: Holo-[acyl-carrier-protein] synthase (116 aa).

Mg(2+) contacts are provided by aspartate 8 and glutamate 59.

The protein belongs to the P-Pant transferase superfamily. AcpS family. It depends on Mg(2+) as a cofactor.

It localises to the cytoplasm. It catalyses the reaction apo-[ACP] + CoA = holo-[ACP] + adenosine 3',5'-bisphosphate + H(+). Transfers the 4'-phosphopantetheine moiety from coenzyme A to a Ser of acyl-carrier-protein. The protein is Holo-[acyl-carrier-protein] synthase of Staphylococcus saprophyticus subsp. saprophyticus (strain ATCC 15305 / DSM 20229 / NCIMB 8711 / NCTC 7292 / S-41).